We begin with the raw amino-acid sequence, 736 residues long: Dynamin-1-like protein (736 aa).

Residue methionine 1 is modified to N-acetylmethionine. One can recognise a Dynamin-type G domain in the interval 22 to 302; the sequence is IIQLPQIVVV…LMHHIRDCLP (281 aa). Residues 32–39 are G1 motif; that stretch reads GTQSSGKS. 32-40 lines the GTP pocket; sequence GTQSSGKSS. The interval 58–60 is G2 motif; that stretch reads VTR. Residues 146–149 form a G3 motif region; it reads DLPG. A G4 motif region spans residues 215–218; that stretch reads TKLD. GTP-binding positions include 215-221 and 246-249; these read TKLDLMD and NRSQ. The segment at 245 to 248 is G5 motif; the sequence is VNRS. The segment at 344–489 is middle domain; that stretch reads YCNTIEGTAK…NEMVHNLVAI (146 aa). Residues 448–685 are interaction with GSK3B; it reads NYSTQELLRF…NHVKDTLQSE (238 aa). The segment at 502-569 is b domain; the sequence is ADACGLMNNN…IQDNRRETKN (68 aa). The interval 522–554 is disordered; it reads RELPSAGSRDKSSKVPSALAPASQEPPPAASAE. Serine 529 is subject to Phosphoserine. Residues lysine 532, lysine 535, lysine 558, and lysine 568 each participate in a glycyl lysine isopeptide (Lys-Gly) (interchain with G-Cter in SUMO) cross-link. The interval 542–736 is C-terminal dimerization domain; that stretch reads PASQEPPPAA…IAEIRETHLW (195 aa). Residues 566-588 are disordered; it reads ETKNVPSAGGGIGDGGQEPTTGN. Threonine 585 and threonine 586 each carry an O-linked (GlcNAc) threonine glycan. Residue lysine 594 forms a Glycyl lysine isopeptide (Lys-Gly) (interchain with G-Cter in SUMO) linkage. Lysine 597 carries the N6-acetyllysine; alternate modification. A Glycyl lysine isopeptide (Lys-Gly) (interchain with G-Cter in SUMO); alternate cross-link involves residue lysine 597. A Glycyl lysine isopeptide (Lys-Gly) (interchain with G-Cter in SUMO) cross-link involves residue lysine 606. The residue at position 607 (serine 607) is a Phosphoserine. Residue lysine 608 forms a Glycyl lysine isopeptide (Lys-Gly) (interchain with G-Cter in SUMO) linkage. Serine 616 is modified (phosphoserine; by PINK1). A Phosphoserine; by CAMK1 and PKA modification is found at serine 637. Cysteine 644 bears the S-nitrosocysteine mark. In terms of domain architecture, GED spans 644 to 735; that stretch reads CEVIERLIKS…IIAEIRETHL (92 aa). The segment at 654-668 is important for homodimerization; that stretch reads YFLIVRKNIQDSVPK.

The protein belongs to the TRAFAC class dynamin-like GTPase superfamily. Dynamin/Fzo/YdjA family. Homotetramer; dimerizes through the N-terminal GTP-middle region of one molecule binding to the GED domain of another DNM1L molecule. Oligomerizes in a GTP-dependent manner to form membrane-associated tubules with a spiral pattern. Interacts with GSK3B and MARCHF5. Interacts (via the GTPase and B domains) with UBE2I; the interaction promotes sumoylation of DNM1L, mainly in its B domain. Interacts with PPP3CA; the interaction dephosphorylates DNM1L and regulates its transition to mitochondria. Interacts with BCL2L1 isoform BCL-X(L) and CLTA; DNM1L and BCL2L1 isoform BCL-X(L) may form a complex in synaptic vesicles that also contains clathrin and MFF. Interacts with MFF; the interaction is inhibited by C11orf65/MFI. Interacts with FIS1. Interacts with MIEF2 and MIEF1; GTP-dependent, regulates GTP hydrolysis and DNM1L oligomerization. Interacts with PGAM5; this interaction leads to dephosphorylation at Ser-656 and activation of GTPase activity and eventually to mitochondria fragmentation. Interacts with RALBP1; during mitosis, recruits DNM1L to the mitochondrion and mediates its activation by the mitotic kinase cyclin B-CDK1. Interacts with FUNDC1; this interaction recruits DNM1L/DRP1 at ER-mitochondria contact sites. In terms of processing, phosphorylation/dephosphorylation events on two sites near the GED domain regulate mitochondrial fission. Phosphorylation on Ser-637 inhibits mitochondrial fission probably through preventing intramolecular interaction. Dephosphorylated on this site by PPP3CA which promotes mitochondrial fission. Phosphorylation on Ser-616 by Pink1 activates the GTPase activity and promotes mitochondrial fission. Phosphorylated in a circadian manner at Ser-637. Dephosphorylated by PGAM5. Post-translationally, sumoylated on various lysine residues within the B domain, probably by MUL1. Sumoylation positively regulates mitochondrial fission. Desumoylated by SENP5 during G2/M transition of mitosis. Appears to be linked to its catalytic activity. S-nitrosylation increases DNM1L dimerization, mitochondrial fission and causes neuronal damage. In terms of processing, O-GlcNAcylation augments the level of the GTP-bound active form of DNM1L and induces translocation from the cytoplasm to mitochondria in cardiomyocytes. It also decreases phosphorylation at Ser-637. Post-translationally, ubiquitination by MARCHF5 affects mitochondrial morphology. In terms of tissue distribution, expressed in the cerebellum and in several regions of the cerebrum and diencephalon. Strongly expressed in the cerebellar Purkinje cells and in the pontile giant neurons. Widely expressed. As to expression, brain-specific. In terms of tissue distribution, brain-specific (at protein level). Expressed in most of the subregions of the brain, including the cerebellum, midbrain, hippocampus, striatum, cerebral cortex, and brain stem. Weakly expressed in the olfactory bulb.

The protein resides in the cytoplasm. The protein localises to the cytosol. It is found in the golgi apparatus. It localises to the endomembrane system. Its subcellular location is the mitochondrion outer membrane. The protein resides in the peroxisome. The protein localises to the membrane. It is found in the clathrin-coated pit. It localises to the cytoplasmic vesicle. Its subcellular location is the secretory vesicle. The protein resides in the synaptic vesicle membrane. The protein localises to the lysosome. It is found in the late endosome. It localises to the cell membrane. Its subcellular location is the postsynaptic density. It carries out the reaction GTP + H2O = GDP + phosphate + H(+). In terms of biological role, functions in mitochondrial and peroxisomal division. Mediates membrane fission through oligomerization into membrane-associated tubular structures that wrap around the scission site to constrict and sever the mitochondrial membrane through a GTP hydrolysis-dependent mechanism. The specific recruitment at scission sites is mediated by membrane receptors like MFF, MIEF1 and MIEF2 for mitochondrial membranes. While the recruitment by the membrane receptors is GTP-dependent, the following hydrolysis of GTP induces the dissociation from the receptors and allows DNM1L filaments to curl into closed rings that are probably sufficient to sever a double membrane. Acts downstream of PINK1 to promote mitochondrial fission in a PRKN-dependent manner. Plays an important role in mitochondrial fission during mitosis. Required for formation of endocytic vesicles. Through its function in mitochondrial division, ensures the survival of at least some types of postmitotic neurons, including Purkinje cells, by suppressing oxidative damage. Required for normal brain development, including that of cerebellum. Facilitates developmentally regulated apoptosis during neural tube formation. Required for a normal rate of cytochrome c release and caspase activation during apoptosis; this requirement may depend upon the cell type and the physiological apoptotic cues. Proposed to regulate synaptic vesicle membrane dynamics through association with BCL2L1 isoform Bcl-X(L) which stimulates its GTPase activity in synaptic vesicles; the function may require its recruitment by MFF to clathrin-containing vesicles. Required for programmed necrosis execution. Rhythmic control of its activity following phosphorylation at Ser-637 is essential for the circadian control of mitochondrial ATP production. Functionally, regulates postsynaptic clathrin-mediated endocytosis by positioning the endocytic zone at the postsynaptic density, independently of mitochondrial division. The chain is Dynamin-1-like protein from Mus musculus (Mouse).